The sequence spans 204 residues: Urease accessory protein UreG (204 aa).

Residue 12–19 (GPVGSGKT) coordinates GTP.

Belongs to the SIMIBI class G3E GTPase family. UreG subfamily. In terms of assembly, homodimer. UreD, UreF and UreG form a complex that acts as a GTP-hydrolysis-dependent molecular chaperone, activating the urease apoprotein by helping to assemble the nickel containing metallocenter of UreC. The UreE protein probably delivers the nickel.

The protein resides in the cytoplasm. Functionally, facilitates the functional incorporation of the urease nickel metallocenter. This process requires GTP hydrolysis, probably effectuated by UreG. In Pseudomonas fluorescens (strain SBW25), this protein is Urease accessory protein UreG.